Reading from the N-terminus, the 296-residue chain is Porphobilinogen deaminase (296 aa).

C235 is modified (S-(dipyrrolylmethanemethyl)cysteine).

This sequence belongs to the HMBS family. As to quaternary structure, monomer. Requires dipyrromethane as cofactor.

It carries out the reaction 4 porphobilinogen + H2O = hydroxymethylbilane + 4 NH4(+). It participates in porphyrin-containing compound metabolism; protoporphyrin-IX biosynthesis; coproporphyrinogen-III from 5-aminolevulinate: step 2/4. In terms of biological role, tetrapolymerization of the monopyrrole PBG into the hydroxymethylbilane pre-uroporphyrinogen in several discrete steps. This chain is Porphobilinogen deaminase, found in Alkaliphilus oremlandii (strain OhILAs) (Clostridium oremlandii (strain OhILAs)).